We begin with the raw amino-acid sequence, 569 residues long: Dicarboxylate transporter 1, chloroplastic (569 aa).

Residues 1-93 (MASMALSLTS…VPSPAPVSAP (93 aa)) constitute a chloroplast transit peptide. Positions 23–74 (SLKPLSKSQPSISLPSLRSNASKSPSLSHKHFLSPPSLLLPHKLKPISASSP) are enriched in low complexity. Residues 23–93 (SLKPLSKSQP…VPSPAPVSAP (71 aa)) are disordered. Residues 75–90 (TNPPPPPAPVPSPAPV) show a composition bias toward pro residues. 12 helical membrane passes run 106-126 (PLLASILTGVIIWFIPTPEGV), 134-154 (LAIFLSTIVGIITQPLPLGAV), 172-192 (AAFSAFGDPIPWLIALAFFFA), 241-261 (AGGIFLPLVKSLCIACGSNVG), 268-288 (LGAWLMLTCFQTSVISSSMFL), 317-337 (AAFVPGLVSLIVVPLLLYVVY), 367-387 (IMAVTLLLTVGLWVFGGKLGV), 388-408 (DAVTAAILGLSVLLITGVVTW), 423-443 (WFAALIAMAGYLNKYGLITWF), 450-470 (VVGGLGLSWQMSFGVLVLLYF), 490-510 (FLSVASALGTPPFLAAIVLSF), and 543-563 (YGFLISIVNLIIWLGVGGLWW).

This sequence belongs to the SLC13A/DASS transporter (TC 2.A.47) family. DIT1 subfamily. Monomer. In terms of processing, the N-terminus is blocked. In terms of tissue distribution, expressed in leaves.

The protein localises to the plastid. It is found in the chloroplast inner membrane. Its function is as follows. 2-oxoglutarate/malate translocator that transports carbon skeletons into chloroplasts for net glutamate synthesis. This translocator exchanges malate for internal succinate, fumarate and 2-oxoglutarate but not for aspartate and glutamate. Involved with DIT2 in primary ammonia assimilation and in the re-assimilation of ammonia generated by the photorespiratory pathway. Imports 2-oxoglutarate into plastids as precursor for ammonia assimilation. 2-oxoglutarate is converted to glutamate, the end product of ammonia assimilation, which is exported to the cytosol by DIT2. The polypeptide is Dicarboxylate transporter 1, chloroplastic (DIT1) (Spinacia oleracea (Spinach)).